A 1518-amino-acid polypeptide reads, in one-letter code: Hormone receptor 4 (1518 aa).

Disordered stretches follow at residues arginine 30–alanine 50, threonine 145–glutamate 327, proline 380–alanine 587, valine 672–alanine 820, and serine 887–aspartate 913. The segment covering aspartate 34–proline 46 has biased composition (polar residues). Composition is skewed to low complexity over residues threonine 145–glycine 189 and serine 208–serine 219. A compositionally biased stretch (gly residues) spans glutamate 238–threonine 260. Over residues serine 291 to alanine 323 the composition is skewed to low complexity. Positions glutamine 400–glutamine 429 are enriched in basic and acidic residues. 2 stretches are compositionally biased toward polar residues: residues serine 430–histidine 451 and arginine 475–methionine 489. Composition is skewed to low complexity over residues glutamine 490–leucine 529, histidine 546–glutamine 586, glycine 681–serine 705, and glycine 738–serine 799. Gly residues-rich tracts occupy residues serine 800–glycine 812 and glycine 892–glycine 902. A DNA-binding region (nuclear receptor) is located at residues proline 918–glutamate 993. 2 NR C4-type zinc fingers span residues cysteine 921–cysteine 941 and cysteine 957–cysteine 976. Disordered stretches follow at residues lysine 1015–alanine 1101, leucine 1142–histidine 1210, and lysine 1341–isoleucine 1371. Low complexity predominate over residues glutamine 1021–serine 1060. The segment covering proline 1061–glutamine 1077 has biased composition (basic residues). 2 stretches are compositionally biased toward low complexity: residues glutamine 1078–alanine 1101 and glutamine 1144–glutamine 1193. Residues glutamine 1194–alanine 1205 are compositionally biased toward gly residues. The NR LBD domain maps to histidine 1250–arginine 1518. The span at histidine 1351–serine 1368 shows a compositional bias: low complexity.

Belongs to the nuclear hormone receptor family. NR1 subfamily. In terms of tissue distribution, during L2 and L3 stages, strong constitutive expression is seen in the ring gland. Lower expression is detected in specific neurons of the central nervous system (CNS) (at protein level).

The protein localises to the nucleus. In terms of biological role, coordinates growth and maturation by mediating endocrine responses to the attainment of critical weight during larval development. Plays a central role in the genetic cascades triggered by the steroid hormone ecdysone at the onset of metamorphosis, acting as both a repressor of the early ecdysone-induced regulatory genes and an inducer of the ftz-f1 midprepupal competence factor. The protein is Hormone receptor 4 (Hr4) of Drosophila melanogaster (Fruit fly).